The primary structure comprises 837 residues: MVSPGQNDLSSDKSQIDPFVKKQNAKLTQVIQNFFSKSVQIVLQSRIQSESHNKEEQLKVGGDVGGHNVSSKINKWFNLHMYNDNLPKEELKLWKNINDVSQMPPMIIEVYLDLRQLTAIQTVILRDDNGNPWTVAKGGSKKHEVVLERWLIEFDANTVSGTIVDELPLIYKQAIILFRSLYGYTRLMPTFKLKKNLNKSNLNIGCKILDGKQPISSKGRIGLSKSIIPHQMLTTESHMSHKHFLPIQTTLGTLKISIAYRNHHEFSIHDNEELLSTHFVNIDDNDKDSEITPVEIEFKEELKIDRDSTTNEKVNEPEDDESHHADVESSQEHLQSEEPDESFEQDAKHISGSRKKFSISNNASMSLSPCSSGPQTVTEDSPSHNKPSANTTPIVSQRPTINPFKVGSISTSPPATTNFGGSSLERKVSITSNKSASNASLAAMLRNPRSSTSSTNTTANIPIANNNSNNQYNSTFPRSVSSSHGSNLAHDNDNLLGFSNPDNTSNTPRFSSSFGSRASRRFSNTSGRQSSLPSGNMNDTSLLATSAGSASSDAPMSGLYIDDDIGDFVRMIDSKSDLRFSGYNSNNDSKISYNQGSNSQIDALNKFQMLKNQHQQLSDSVSASLILHHNQLSGSRPSSRKSSHSIHSPPPSLPSGSYDNSHLPSINSKLRENSSTSGNDDNLARDSGTPSSRKNSFDYSTNSNTTFLKSPITNKLVSSPVTSTTPIHSCLHKTNNESGVISGLATTPSIYNDRRQIHYESVFDDDDDDYANNTADNRDQDDSLKLYLTNKLANAPKSNTNSRSLKSSTNPPNIGEDDDDDDDDLLFTMSDMNLAKH.

The span at 302–336 (LKIDRDSTTNEKVNEPEDDESHHADVESSQEHLQS) shows a compositional bias: basic and acidic residues. Disordered regions lie at residues 302–400 (LKID…QRPT), 446–540 (RNPR…MNDT), 631–704 (QLSG…TNSN), and 793–837 (ANAP…LAKH). Over residues 358 to 400 (SISNNASMSLSPCSSGPQTVTEDSPSHNKPSANTTPIVSQRPT) the composition is skewed to polar residues. Residues 450-475 (SSTSSTNTTANIPIANNNSNNQYNST) show a composition bias toward low complexity. Residues 476 to 486 (FPRSVSSSHGS) show a composition bias toward polar residues. A compositionally biased stretch (low complexity) spans 509–523 (RFSSSFGSRASRRFS). 4 stretches are compositionally biased toward polar residues: residues 524–538 (NTSG…GNMN), 658–680 (YDNS…SGND), 688–704 (GTPS…TNSN), and 796–812 (PKSN…TNPP). Acidic residues predominate over residues 815–825 (GEDDDDDDDDL).

This sequence belongs to the ATG13 family. Fungi subfamily. In terms of assembly, interacts with ATG1 to form the ATG1-ATG13 kinase complex.

The protein localises to the cytoplasm. Its subcellular location is the preautophagosomal structure. Functionally, activates the ATG1 kinase in a nutritional condition dependent manner through the TOR pathway, leading to autophagy. Also involved in cytoplasm to vacuole transport (Cvt) and more specifically in Cvt vesicle formation. Seems to play a role in the switching machinery regulating the conversion between the Cvt pathway and autophagy. Finally, ATG13 is also required for glycogen storage during stationary phase. The chain is Autophagy-related protein 13 (ATG13) from Debaryomyces hansenii (strain ATCC 36239 / CBS 767 / BCRC 21394 / JCM 1990 / NBRC 0083 / IGC 2968) (Yeast).